Reading from the N-terminus, the 95-residue chain is Costars family protein WS02710_H03 (95 aa).

It belongs to the costars family.

This Picea sitchensis (Sitka spruce) protein is Costars family protein WS02710_H03.